Reading from the N-terminus, the 265-residue chain is Undecaprenyl-diphosphatase (265 aa).

Helical transmembrane passes span 38–58, 80–100, 107–127, 135–155, 175–195, 213–233, and 244–264; these read SDMF…IIYW, LIVA…LGFE, PIAW…WAAA, ITWL…VFPG, AAAT…ASGY, ALAI…KWLL, and FAIY…SGLI.

The protein belongs to the UppP family.

The protein resides in the cell inner membrane. The enzyme catalyses di-trans,octa-cis-undecaprenyl diphosphate + H2O = di-trans,octa-cis-undecaprenyl phosphate + phosphate + H(+). Its function is as follows. Catalyzes the dephosphorylation of undecaprenyl diphosphate (UPP). Confers resistance to bacitracin. In Rhizobium etli (strain CIAT 652), this protein is Undecaprenyl-diphosphatase.